Consider the following 1085-residue polypeptide: Solute carrier family 12 member 4 (1085 aa).

Residues 1–119 (MPHFTVVPVD…RRAAKAPSMG (119 aa)) are Cytoplasmic-facing. Ser24 carries the phosphoserine modification. Over residues 28–46 (YGERAEREDPDGHGNHRES) the composition is skewed to basic and acidic residues. The disordered stretch occupies residues 28 to 47 (YGERAEREDPDGHGNHRESS). 4 positions are modified to phosphoserine: Ser47, Ser59, Ser81, and Ser88. The discontinuously helical transmembrane segment at 120 to 141 (TLMGVYLPCLQNIFGVILFLRL) threads the bilayer. K(+)-binding residues include Asn131 and Ile132. At 142-149 (TWMVGTAG) the chain is on the extracellular side. A helical membrane pass occupies residues 150–172 (VLQALLIVLICCCCTLLTAISMS). At 173–196 (AIATNGVVPAGGSYFMISRSLGPE) the chain is on the cytoplasmic side. A helical transmembrane segment spans residues 197–225 (FGGAVGLCFYLGTTFAAAMYILGAIEILL). Tyr216 contributes to the K(+) binding site. The Extracellular portion of the chain corresponds to 226–248 (TYIAPPAAIFYPSGTHDTSNATL). Asn245 carries an N-linked (GlcNAc...) asparagine glycan. 2 helical membrane-spanning segments follow: residues 249-271 (NNMR…VGVK) and 272-297 (YVNK…GGIK). The Extracellular portion of the chain corresponds to 298–419 (SMFDPPVFPV…LYVVADIATS (122 aa)). Cys308 and Cys323 are joined by a disulfide. N-linked (GlcNAc...) asparagine glycans are attached at residues Asn312, Asn331, and Asn347. Cys343 and Cys353 are oxidised to a cystine. The helical transmembrane segment at 420–440 (FTVLVGIFFPSVTGIMAGSNR) threads the bilayer. Residues Pro429 and Thr432 each contribute to the K(+) site. Positions 433, 434, and 435 each coordinate chloride. Residues 441–450 (SGDLRDAQKS) lie on the Cytoplasmic side of the membrane. The chain crosses the membrane as a helical span at residues 451–473 (IPVGTILAIVTTSLVYFSSVVLF). The Extracellular portion of the chain corresponds to 474–504 (GACIEGVVLRDKYGDGVSRNLVVGTLAWPSP). The helical transmembrane segment at 505-531 (WVIVVGSFFSTCGAGLQSLTGAPRLLQ) threads the bilayer. Topologically, residues 532-554 (AIAKDNIIPFLRVFGHGKANGEP) are cytoplasmic. A run of 2 helical transmembrane segments spans residues 555-575 (TWAL…ASLD) and 576-598 (MVAP…ACAV). Tyr589 is a chloride binding site. Residues 599–612 (QTLLRTPNWRPRFK) lie on the Cytoplasmic side of the membrane. The next 2 membrane-spanning stretches (helical) occupy residues 613–635 (YYHW…VSSW) and 636–651 (YYAL…IYKY). Topologically, residues 652-1085 (IEYQGAEKEW…GGREVITIYS (434 aa)) are cytoplasmic. The segment at 665–681 (IRGLSLSAARYALLRLE) is scissor helix. 5 residues coordinate ATP: Leu697, Lys699, Lys707, Tyr708, and Val730. Residue Ser734 is modified to Phosphoserine. ATP contacts are provided by Gly794, Trp795, and Tyr797. Phosphoserine occurs at positions 916 and 967. Thr983 carries the phosphothreonine modification. Ser1050 is modified (phosphoserine).

This sequence belongs to the SLC12A transporter family. K/Cl co-transporter subfamily. In terms of assembly, homodimer; adopts a domain-swap conformation at the scissor helices connecting the transmembrane domain and C-terminal domain. Heterodimer with other K-Cl cotransporters. In terms of processing, N-glycosylated. Post-translationally, phosphorylated, phosphorylation may regulate transporter activity.

It is found in the cell membrane. It carries out the reaction K(+)(in) + chloride(in) = K(+)(out) + chloride(out). Inhibited by WNK3. Its function is as follows. Mediates electroneutral potassium-chloride cotransport when activated by cell swelling. May contribute to cell volume homeostasis in single cells. May be involved in the regulation of basolateral Cl(-) exit in NaCl absorbing epithelia. The polypeptide is Solute carrier family 12 member 4 (SLC12A4) (Oryctolagus cuniculus (Rabbit)).